We begin with the raw amino-acid sequence, 253 residues long: Tetraspanin-11 (253 aa).

The next 4 helical transmembrane spans lie at 19–39, 63–83, 90–110, and 220–240; these read LLFI…AVGV, ILIF…GAVI, LSAY…AGVL, and LLLM…GMIL.

The protein belongs to the tetraspanin (TM4SF) family.

The protein resides in the membrane. The protein is Tetraspanin-11 (TSPAN11) of Bos taurus (Bovine).